We begin with the raw amino-acid sequence, 342 residues long: CD2 antigen cytoplasmic tail-binding protein 2 (342 aa).

The interval M1–I64 is disordered. Residue K26 forms a Glycyl lysine isopeptide (Lys-Gly) (interchain with G-Cter in SUMO2) linkage. Residue K44 is modified to N6-acetyllysine. A phosphoserine mark is found at S46, S49, and S117. Disordered stretches follow at residues R130–P150 and L177–L200. Position 196 is a phosphoserine (S196). The GYF domain maps to D281–E339.

As to quaternary structure, component of the U5 snRNP complex composed of the U5 snRNA and at least PRPF6, PRPF8, SNRNP200, EFTUD2, SNRNP40, DDX23, TXNL4A and CD2BP2. Interacts directly with TXNL4A and PRPF6. Interacts (via GYF domain) with CD2 (via Pro-rich sequence in the cytoplasmic domain). Interacts with PQBP1.

Its subcellular location is the cytoplasm. It is found in the nucleus. In terms of biological role, involved in pre-mRNA splicing as component of the U5 snRNP complex that is involved in spliceosome assembly. The chain is CD2 antigen cytoplasmic tail-binding protein 2 (Cd2bp2) from Mus musculus (Mouse).